Consider the following 66-residue polypeptide: Nigrocin-2ISb (66 aa).

The first 22 residues, 1–22 (MFTLKKSMLLLFFLGTINLSLC), serve as a signal peptide directing secretion. A propeptide spans 23–43 (QEERDAEEERRDEDNAKMEEI) (removed in mature form). C60 and C66 form a disulfide bridge.

As to expression, expressed by the skin glands.

Its subcellular location is the secreted. Its function is as follows. Has antimicrobial activity against Gram-negative bacterium E.coli ATCC 8739 (MIC=50 ug), against Gram positive bacteria S.aureus ATCC 6538 (MIC=3.1 ug), methicillin-resistant S.aureus ATCC 43300 (MIC=12.5 ug), B.subtilis ATCC 6633 (MIC=12.5 ug) and against fungus C.albicans ATCC 90028 (MIC=50 ug). The protein is Nigrocin-2ISb of Odorrana ishikawae (Ishikawa's frog).